The sequence spans 277 residues: Pantothenate synthetase (277 aa).

26 to 33 (MGNLHEGH) lines the ATP pocket. His-33 serves as the catalytic Proton donor. Gln-57 serves as a coordination point for (R)-pantoate. Position 57 (Gln-57) interacts with beta-alanine. 144–147 (GKKD) is a binding site for ATP. Residue Gln-150 participates in (R)-pantoate binding. ATP-binding positions include Gly-173 and 181–184 (LSSR).

This sequence belongs to the pantothenate synthetase family. As to quaternary structure, homodimer.

The protein resides in the cytoplasm. It catalyses the reaction (R)-pantoate + beta-alanine + ATP = (R)-pantothenate + AMP + diphosphate + H(+). It participates in cofactor biosynthesis; (R)-pantothenate biosynthesis; (R)-pantothenate from (R)-pantoate and beta-alanine: step 1/1. Functionally, catalyzes the condensation of pantoate with beta-alanine in an ATP-dependent reaction via a pantoyl-adenylate intermediate. This chain is Pantothenate synthetase, found in Chromobacterium violaceum (strain ATCC 12472 / DSM 30191 / JCM 1249 / CCUG 213 / NBRC 12614 / NCIMB 9131 / NCTC 9757 / MK).